Consider the following 357-residue polypeptide: DNA replication and repair protein RecF (357 aa).

Gly-30–Thr-37 serves as a coordination point for ATP.

It belongs to the RecF family.

The protein localises to the cytoplasm. Functionally, the RecF protein is involved in DNA metabolism; it is required for DNA replication and normal SOS inducibility. RecF binds preferentially to single-stranded, linear DNA. It also seems to bind ATP. This chain is DNA replication and repair protein RecF, found in Citrobacter koseri (strain ATCC BAA-895 / CDC 4225-83 / SGSC4696).